Here is a 374-residue protein sequence, read N- to C-terminus: F-box/LRR-repeat protein 8 (374 aa).

Positions 2–48 (AEPGEGLPEEVLALIFRHLSLRDRAAAARVCRAWAAAATCSAVWHDT) constitute an F-box domain.

Directly interacts with SKP1 and CUL1.

Functionally, substrate-recognition component of the SCF (SKP1-CUL1-F-box protein)-type E3 ubiquitin ligase complex. This Homo sapiens (Human) protein is F-box/LRR-repeat protein 8 (FBXL8).